The chain runs to 198 residues: Transcriptional regulator GfcR (198 aa).

This sequence belongs to the purine/pyrimidine phosphoribosyltransferase family. GfcR subfamily.

In Methanocorpusculum labreanum (strain ATCC 43576 / DSM 4855 / Z), this protein is Transcriptional regulator GfcR.